Reading from the N-terminus, the 788-residue chain is Cyclin-F (788 aa).

The short motif at 20 to 28 (KRRIRRRPR) is the Nuclear localization signal 1 element. One can recognise an F-box domain in the interval 29 to 76 (NLTILNLPEDALFHILKWLSVGDILAVRAVHSHLKYLVDNHASVWACA). Positions 291–405 (HAVNKQRVFS…EVVSALDGKI (115 aa)) constitute a Cyclin N-terminal domain. 4 consecutive short sequence motifs (d box) follow at residues 310-313 (RYIL), 343-346 (RRRL), 349-352 (RYRL), and 351-354 (RLQL). Disordered stretches follow at residues 566-585 (SARRTKRKRENSLQEDRGSF) and 700-788 (TSGY…FLKL). Positions 568-574 (RRTKRKR) match the Nuclear localization signal 2 motif. Positions 582 to 766 (RGSFVTTPTA…ESCAPQQQVK (185 aa)) are PEST. Polar residues-rich tracts occupy residues 700 to 716 (TSGYSSVNSASPTDSGR) and 723 to 738 (RSTSELPTGSSLNTQP). Positions 767–770 (RKNL) match the D box 5 motif.

Belongs to the cyclin family. Cyclin AB subfamily. As to quaternary structure, component of the SCF(CCNF) complex consisting of CUL1, RBX1, SKP1 and CCNF. Interacts with SKP1. Interacts with CUL1. Interacts with CCNB1; interaction is required for nuclear localization of CCNB1. Interacts with CCP110; this interaction leads to CCP110 ubiquitination and degradation via the proteasome pathway. Interacts (via the Cyclin N-terminal domain) with MYBL2/BMYB. Interacts with FZR1/CDH1 (via N-terminus). Interacts with RRM2 (via Cy motif and when phosphorylated at 'Thr-33'); the interaction occurs exclusively in G2 and early M. Interacts with CDC6 (via Cy motif); the interaction takes place during G2 and M phase. In terms of processing, degraded when the spindle assembly checkpoint is activated during the G2-M transition. Degradation is not dependent on the proteasome or ubiquitin and depends on the C-terminal PEST sequence. Phosphorylated just before cells enter into mitosis. Post-translationally, ubiquitinated by the anaphase-promoting complex (APC/C); leading to its degradation by the proteasome.

The protein resides in the nucleus. It is found in the cytoplasm. Its subcellular location is the perinuclear region. The protein localises to the cytoskeleton. It localises to the microtubule organizing center. The protein resides in the centrosome. It is found in the centriole. Its function is as follows. Substrate recognition component of a SCF (SKP1-CUL1-F-box protein) E3 ubiquitin-protein ligase complex which mediates the ubiquitination and subsequent proteasomal degradation of target proteins. The SCF(CCNF) E3 ubiquitin-protein ligase complex is an integral component of the ubiquitin proteasome system (UPS) and links proteasome degradation to the cell cycle. Mediates the substrate recognition and the proteasomal degradation of various target proteins involved in the regulation of cell cycle progression and in the maintenance of genome stability. Mediates the ubiquitination and subsequent proteasomal degradation of CP110 during G2 phase, thereby acting as an inhibitor of centrosome reduplication. In G2, mediates the ubiquitination and proteasomal degradation of CDC6, thereby suppressing DNA re-replication and preventing genome instability. Involved in the ubiquitination and degradation of the substrate adapter CDH1 of the anaphase-promoting complex (APC/C), thereby acting as an antagonist of APC/C in regulating G1 progression and S phase entry. May play a role in the G2 cell cycle checkpoint control after DNA damage, possibly by promoting the ubiquitination of MYBL2/BMYB. The polypeptide is Cyclin-F (CCNF) (Bos taurus (Bovine)).